A 219-amino-acid polypeptide reads, in one-letter code: Ribose-5-phosphate isomerase A (219 aa).

Residues 28 to 31 (SGST), 81 to 84 (DGAD), and 94 to 97 (KGGG) contribute to the substrate site. Glu103 acts as the Proton acceptor in catalysis. Lys121 lines the substrate pocket.

The protein belongs to the ribose 5-phosphate isomerase family. Homodimer.

It carries out the reaction aldehydo-D-ribose 5-phosphate = D-ribulose 5-phosphate. The protein operates within carbohydrate degradation; pentose phosphate pathway; D-ribose 5-phosphate from D-ribulose 5-phosphate (non-oxidative stage): step 1/1. In terms of biological role, catalyzes the reversible conversion of ribose-5-phosphate to ribulose 5-phosphate. In Actinobacillus succinogenes (strain ATCC 55618 / DSM 22257 / CCUG 43843 / 130Z), this protein is Ribose-5-phosphate isomerase A.